Reading from the N-terminus, the 422-residue chain is Serine/threonine-protein kinase H1 homolog (422 aa).

The interval Phe-35–Lys-80 is disordered. Over residues Gly-46–Gln-62 the composition is skewed to polar residues. Residues Tyr-96–Ile-353 form the Protein kinase domain. ATP contacts are provided by residues Ile-102–Val-110 and Lys-125. Asp-216 serves as the catalytic Proton acceptor. The tract at residues Arg-376–Gly-422 is disordered. A compositionally biased stretch (low complexity) spans Thr-384–Thr-396. Residues Arg-405–Arg-414 are compositionally biased toward basic and acidic residues.

This sequence belongs to the protein kinase superfamily. CAMK Ser/Thr protein kinase family.

The catalysed reaction is L-seryl-[protein] + ATP = O-phospho-L-seryl-[protein] + ADP + H(+). It catalyses the reaction L-threonyl-[protein] + ATP = O-phospho-L-threonyl-[protein] + ADP + H(+). The protein is Serine/threonine-protein kinase H1 homolog (pskh1) of Danio rerio (Zebrafish).